The following is a 166-amino-acid chain: Small ribosomal subunit protein uS5 (166 aa).

One can recognise an S5 DRBM domain in the interval 11 to 74; that stretch reads LQEKLIAVNR…EKARRNMMNV (64 aa).

This sequence belongs to the universal ribosomal protein uS5 family. As to quaternary structure, part of the 30S ribosomal subunit. Contacts proteins S4 and S8.

In terms of biological role, with S4 and S12 plays an important role in translational accuracy. Functionally, located at the back of the 30S subunit body where it stabilizes the conformation of the head with respect to the body. The chain is Small ribosomal subunit protein uS5 from Sodalis glossinidius (strain morsitans).